A 364-amino-acid polypeptide reads, in one-letter code: MRFVDEVTISVSAGKGGNGCVSFRREKFIPKGGPNGGDGGDGGNIIFKADSRLLTLYDFRVQRHYRAQNGEGGKGSQRHGKKGEDLILHLPVGTIIFEQLLDKEYFLVDLDRPGVEFLIARGGRGGKGNEHFKSSTMRTPRFAQKGEMGEEKYLRLELKILADAGIIGLPNAGKSTLISKLSAAQPKIAAYPFTTLNPNLGVMIDNLDPDKRLVLADIPGLIEGACKGQGLGHQFLKHIERTRFLIHVLSSEDIDEDNPWLGFDIVNEELKEFDHTLMQRTQLLVVNKIDVLQPEKLSHIKQVAESSGKIIYFISAETGEGIELLVDAIWKLQSYRLNAPFIHLKPIEHKSDEEFAIEVAYTKE.

One can recognise an Obg domain in the interval Met-1–Leu-161. An OBG-type G domain is found at Ala-162–Ser-334. GTP contacts are provided by residues Gly-168–Ser-175, Phe-193–Asn-197, Asp-217–Gly-220, Asn-287–Asp-290, and Ser-315–Glu-317. Residues Ser-175 and Thr-195 each coordinate Mg(2+).

It belongs to the TRAFAC class OBG-HflX-like GTPase superfamily. OBG GTPase family. Monomer. Mg(2+) serves as cofactor.

The protein resides in the cytoplasm. Its function is as follows. An essential GTPase which binds GTP, GDP and possibly (p)ppGpp with moderate affinity, with high nucleotide exchange rates and a fairly low GTP hydrolysis rate. Plays a role in control of the cell cycle, stress response, ribosome biogenesis and in those bacteria that undergo differentiation, in morphogenesis control. This chain is GTPase Obg, found in Lawsonia intracellularis (strain PHE/MN1-00).